The chain runs to 360 residues: 1-aminocyclopropane-1-carboxylate oxidase homolog 6 (360 aa).

The 102-residue stretch at Lys208–Ser309 folds into the Fe2OG dioxygenase domain. Positions 232, 234, and 288 each coordinate Fe cation. Arg299 serves as a coordination point for 2-oxoglutarate.

It belongs to the iron/ascorbate-dependent oxidoreductase family. The cofactor is Fe(2+). Constitutively expressed in leaves and blades.

This Arabidopsis thaliana (Mouse-ear cress) protein is 1-aminocyclopropane-1-carboxylate oxidase homolog 6.